Reading from the N-terminus, the 204-residue chain is UPF0637 protein LMHCC_1566 (204 aa).

This sequence belongs to the UPF0637 family.

In Listeria monocytogenes serotype 4a (strain HCC23), this protein is UPF0637 protein LMHCC_1566.